The chain runs to 849 residues: Mechanosensitive ion channel protein 7 (849 aa).

Residues M1–S49 form a disordered region. Over residues S9–D21 the composition is skewed to polar residues. The next 6 helical transmembrane spans lie at A231–L251, L274–I294, T313–D333, V344–I364, M606–A626, and A642–I662.

This sequence belongs to the MscS (TC 1.A.23) family.

The protein resides in the membrane. Functionally, mechanosensitive channel that opens in response to stretch forces in the membrane lipid bilayer. This Arabidopsis thaliana (Mouse-ear cress) protein is Mechanosensitive ion channel protein 7 (MSL7).